A 136-amino-acid chain; its full sequence is Histone H2B (136 aa).

The segment covering 1–10 has biased composition (basic and acidic residues); the sequence is MPPKAADKKP. Positions 1–44 are disordered; sequence MPPKAADKKPAAKAPVASKAPEKKDAGKKTASTGEKKKRTKARR. N6-acetyllysine; alternate is present on residues Lys8 and Lys9. Residues Lys8 and Lys9 each participate in a glycyl lysine isopeptide (Lys-Gly) (interchain with G-Cter in SUMO); alternate cross-link. Position 13 is an N6-acetyllysine (Lys13). N6-acetyllysine; alternate is present on Lys23. Lys23 is covalently cross-linked (Glycyl lysine isopeptide (Lys-Gly) (interchain with G-Cter in SUMO); alternate). Residue Lys24 forms a Glycyl lysine isopeptide (Lys-Gly) (interchain with G-Cter in SUMO) linkage. Lys130 participates in a covalent cross-link: Glycyl lysine isopeptide (Lys-Gly) (interchain with G-Cter in ubiquitin).

The protein belongs to the histone H2B family. The nucleosome is a histone octamer containing two molecules each of H2A, H2B, H3 and H4 assembled in one H3-H4 heterotetramer and two H2A-H2B heterodimers. The octamer wraps approximately 147 bp of DNA. In terms of processing, monoubiquitinated to form H2BK123ub1. H2BK123ub1 gives a specific tag for epigenetic transcriptional activation and is also prerequisite for H3K4me and H3K79me formation. H2BK123ub1 also modulates the formation of double-strand breaks during meiosis and is a prerequisite for DNA-damage checkpoint activation. Post-translationally, acetylated by GCN5 to form H2BK11ac and H2BK16ac. H2BK16ac can also be formed by ESA1. Acetylation of N-terminal lysines and particularly formation of H2BK11acK16ac has a positive effect on transcription. Sumoylation to form H2BK6su or H2BK7su, and probably also H2BK16su or H2BK17su, occurs preferentially near the telomeres and represses gene transcription.

It is found in the nucleus. It localises to the chromosome. Core component of nucleosome. Nucleosomes wrap and compact DNA into chromatin, limiting DNA accessibility to the cellular machineries which require DNA as a template. Histones thereby play a central role in transcription regulation, DNA repair, DNA replication and chromosomal stability. DNA accessibility is regulated via a complex set of post-translational modifications of histones, also called histone code, and nucleosome remodeling. This is Histone H2B (hh2b) from Rosellinia necatrix (White root-rot fungus).